Here is a 169-residue protein sequence, read N- to C-terminus: Transcription antitermination protein NusB (169 aa).

The tract at residues 1 to 20 (MAESSNKPFRGPVRANDRKA) is disordered.

This sequence belongs to the NusB family.

Functionally, involved in transcription antitermination. Required for transcription of ribosomal RNA (rRNA) genes. Binds specifically to the boxA antiterminator sequence of the ribosomal RNA (rrn) operons. The chain is Transcription antitermination protein NusB from Bradyrhizobium sp. (strain BTAi1 / ATCC BAA-1182).